The chain runs to 401 residues: ATP phosphoribosyltransferase regulatory subunit (401 aa).

This sequence belongs to the class-II aminoacyl-tRNA synthetase family. HisZ subfamily. In terms of assembly, heteromultimer composed of HisG and HisZ subunits.

The protein resides in the cytoplasm. Its pathway is amino-acid biosynthesis; L-histidine biosynthesis; L-histidine from 5-phospho-alpha-D-ribose 1-diphosphate: step 1/9. Required for the first step of histidine biosynthesis. May allow the feedback regulation of ATP phosphoribosyltransferase activity by histidine. The sequence is that of ATP phosphoribosyltransferase regulatory subunit from Desulforamulus reducens (strain ATCC BAA-1160 / DSM 100696 / MI-1) (Desulfotomaculum reducens).